A 266-amino-acid polypeptide reads, in one-letter code: Translation initiation factor 2 subunit alpha (266 aa).

Positions 12-83 (GEILIATVKQ…RKGTVDVSLK (72 aa)) constitute an S1 motif domain.

It belongs to the eIF-2-alpha family. Heterotrimer composed of an alpha, a beta and a gamma chain.

In terms of biological role, eIF-2 functions in the early steps of protein synthesis by forming a ternary complex with GTP and initiator tRNA. This is Translation initiation factor 2 subunit alpha from Saccharolobus islandicus (strain M.16.27) (Sulfolobus islandicus).